The primary structure comprises 503 residues: ATP synthase subunit alpha (503 aa).

169-176 (GDRSTGKT) contributes to the ATP binding site.

The protein belongs to the ATPase alpha/beta chains family. F-type ATPases have 2 components, CF(1) - the catalytic core - and CF(0) - the membrane proton channel. CF(1) has five subunits: alpha(3), beta(3), gamma(1), delta(1), epsilon(1). CF(0) has three main subunits: a(1), b(2) and c(9-12). The alpha and beta chains form an alternating ring which encloses part of the gamma chain. CF(1) is attached to CF(0) by a central stalk formed by the gamma and epsilon chains, while a peripheral stalk is formed by the delta and b chains.

It is found in the cell membrane. The catalysed reaction is ATP + H2O + 4 H(+)(in) = ADP + phosphate + 5 H(+)(out). Functionally, produces ATP from ADP in the presence of a proton gradient across the membrane. The alpha chain is a regulatory subunit. In Dehalococcoides mccartyi (strain ATCC BAA-2266 / KCTC 15142 / 195) (Dehalococcoides ethenogenes (strain 195)), this protein is ATP synthase subunit alpha.